Consider the following 154-residue polypeptide: Large ribosomal subunit protein uL13 (154 aa).

The tract at residues 132-154 (PHEAQQPEVLDVKSMNAKNTRSA) is disordered.

It belongs to the universal ribosomal protein uL13 family. As to quaternary structure, part of the 50S ribosomal subunit.

This protein is one of the early assembly proteins of the 50S ribosomal subunit, although it is not seen to bind rRNA by itself. It is important during the early stages of 50S assembly. The polypeptide is Large ribosomal subunit protein uL13 (Paracoccus denitrificans (strain Pd 1222)).